The primary structure comprises 287 residues: Acetyl-coenzyme A carboxylase carboxyl transferase subunit beta (287 aa).

Positions 25–287 constitute a CoA carboxyltransferase N-terminal domain; it reads VWTKCSACEQ…KMLNTHVIEE (263 aa). Zn(2+) is bound by residues Cys-29, Cys-32, Cys-48, and Cys-51. The C4-type zinc finger occupies 29-51; the sequence is CSACEQVLYRAELERNLEVCPKC.

It belongs to the AccD/PCCB family. Acetyl-CoA carboxylase is a heterohexamer composed of biotin carboxyl carrier protein (AccB), biotin carboxylase (AccC) and two subunits each of ACCase subunit alpha (AccA) and ACCase subunit beta (AccD). Zn(2+) serves as cofactor.

It localises to the cytoplasm. It catalyses the reaction N(6)-carboxybiotinyl-L-lysyl-[protein] + acetyl-CoA = N(6)-biotinyl-L-lysyl-[protein] + malonyl-CoA. Its pathway is lipid metabolism; malonyl-CoA biosynthesis; malonyl-CoA from acetyl-CoA: step 1/1. Functionally, component of the acetyl coenzyme A carboxylase (ACC) complex. Biotin carboxylase (BC) catalyzes the carboxylation of biotin on its carrier protein (BCCP) and then the CO(2) group is transferred by the transcarboxylase to acetyl-CoA to form malonyl-CoA. The chain is Acetyl-coenzyme A carboxylase carboxyl transferase subunit beta from Aeromonas salmonicida (strain A449).